The following is a 443-amino-acid chain: ATP-dependent protease ATPase subunit HslU (443 aa).

Residues isoleucine 18, 60–65 (GVGKTE), aspartate 256, glutamate 321, and arginine 393 each bind ATP.

Belongs to the ClpX chaperone family. HslU subfamily. In terms of assembly, a double ring-shaped homohexamer of HslV is capped on each side by a ring-shaped HslU homohexamer. The assembly of the HslU/HslV complex is dependent on binding of ATP.

The protein localises to the cytoplasm. ATPase subunit of a proteasome-like degradation complex; this subunit has chaperone activity. The binding of ATP and its subsequent hydrolysis by HslU are essential for unfolding of protein substrates subsequently hydrolyzed by HslV. HslU recognizes the N-terminal part of its protein substrates and unfolds these before they are guided to HslV for hydrolysis. The chain is ATP-dependent protease ATPase subunit HslU from Enterobacter sp. (strain 638).